The following is an 864-amino-acid chain: DNA mismatch repair protein MutS (864 aa).

623 to 630 (GPNMGGKS) is an ATP binding site.

It belongs to the DNA mismatch repair MutS family.

This protein is involved in the repair of mismatches in DNA. It is possible that it carries out the mismatch recognition step. This protein has a weak ATPase activity. The polypeptide is DNA mismatch repair protein MutS (Polaromonas sp. (strain JS666 / ATCC BAA-500)).